Reading from the N-terminus, the 312-residue chain is Lichenase-2 (312 aa).

An N-terminal signal peptide occupies residues 1–6 (PPSVES). The active-site Proton donor is the Glu99. Asn196 carries an N-linked (GlcNAc...) asparagine glycan. The active-site Nucleophile is the Glu238.

This sequence belongs to the glycosyl hydrolase 17 family.

It carries out the reaction Hydrolysis of (1-&gt;4)-beta-D-glucosidic linkages in beta-D-glucans containing (1-&gt;3)- and (1-&gt;4)-bonds.. The protein operates within glycan metabolism; beta-D-glucan degradation. In terms of biological role, functions in plant cell wall hydrolysis during mobilization of the endosperm in germinating grain or during the growth of vegetative tissues. The chain is Lichenase-2 from Hordeum vulgare (Barley).